Consider the following 241-residue polypeptide: Thymidylate kinase (241 aa).

An ATP-binding site is contributed by 17-24 (GGEGAGKT).

It belongs to the thymidylate kinase family.

It catalyses the reaction dTMP + ATP = dTDP + ADP. Functionally, phosphorylation of dTMP to form dTDP in both de novo and salvage pathways of dTTP synthesis. This is Thymidylate kinase from Thermosynechococcus vestitus (strain NIES-2133 / IAM M-273 / BP-1).